Reading from the N-terminus, the 379-residue chain is Leukocyte elastase inhibitor A (379 aa).

At serine 300 the chain carries Phosphoserine. Residues 351–379 (EFTVDHPFIFFIRHNPTSNVLFLGRVCSP) are CARD-binding motif (CBM).

The protein belongs to the serpin family. Ov-serpin subfamily. In terms of assembly, monomer. Interacts (via C-terminus) with CASP1 and CASP4 (via CARD domain); these interactions regulate the activity of inflammatory caspases. As to expression, ubiquitous with higher expression in pancreas, spleen and bone marrow.

It localises to the secreted. It is found in the cytoplasm. Its subcellular location is the cytolytic granule. The protein resides in the early endosome. In terms of biological role, neutrophil serine protease inhibitor that plays an essential role in the regulation of the innate immune response, inflammation and cellular homeostasis. Acts primarily to protect the cell from proteases released in the cytoplasm during stress or infection. These proteases are important in killing microbes but when released from granules, these potent enzymes also destroy host proteins and contribute to mortality. Regulates the activity of the neutrophil proteases elastase, cathepsin G, proteinase-3, chymase, chymotrypsin, and kallikrein-3. Also acts as a potent intracellular inhibitor of granzyme H. During inflammation, limits the activity of inflammatory caspases CASP1 and CASP4 by suppressing their caspase-recruitment domain (CARD) oligomerization and enzymatic activation. In addition, promotes the proliferation of beta-cells when secreted. This is Leukocyte elastase inhibitor A (Serpinb1a) from Mus musculus (Mouse).